The following is a 504-amino-acid chain: ATP synthase subunit alpha (504 aa).

170–177 serves as a coordination point for ATP; the sequence is GDRQTGKT.

This sequence belongs to the ATPase alpha/beta chains family. As to quaternary structure, F-type ATPases have 2 components, CF(1) - the catalytic core - and CF(0) - the membrane proton channel. CF(1) has five subunits: alpha(3), beta(3), gamma(1), delta(1), epsilon(1). CF(0) has four main subunits: a(1), b(1), b'(1) and c(9-12).

Its subcellular location is the cellular thylakoid membrane. The enzyme catalyses ATP + H2O + 4 H(+)(in) = ADP + phosphate + 5 H(+)(out). Produces ATP from ADP in the presence of a proton gradient across the membrane. The alpha chain is a regulatory subunit. This chain is ATP synthase subunit alpha, found in Prochlorococcus marinus (strain NATL2A).